We begin with the raw amino-acid sequence, 268 residues long: Hydroxyacylglutathione hydrolase (268 aa).

Zn(2+) is bound by residues histidine 56, histidine 58, aspartate 60, histidine 61, histidine 113, aspartate 130, and histidine 168.

This sequence belongs to the metallo-beta-lactamase superfamily. Glyoxalase II family. As to quaternary structure, monomer. It depends on Zn(2+) as a cofactor.

It carries out the reaction an S-(2-hydroxyacyl)glutathione + H2O = a 2-hydroxy carboxylate + glutathione + H(+). Its pathway is secondary metabolite metabolism; methylglyoxal degradation; (R)-lactate from methylglyoxal: step 2/2. Functionally, thiolesterase that catalyzes the hydrolysis of S-D-lactoyl-glutathione to form glutathione and D-lactic acid. In Hydrogenovibrio crunogenus (strain DSM 25203 / XCL-2) (Thiomicrospira crunogena), this protein is Hydroxyacylglutathione hydrolase.